The sequence spans 138 residues: ATP synthase epsilon chain (138 aa).

Belongs to the ATPase epsilon chain family. As to quaternary structure, F-type ATPases have 2 components, CF(1) - the catalytic core - and CF(0) - the membrane proton channel. CF(1) has five subunits: alpha(3), beta(3), gamma(1), delta(1), epsilon(1). CF(0) has three main subunits: a, b and c.

Its subcellular location is the cell inner membrane. Functionally, produces ATP from ADP in the presence of a proton gradient across the membrane. The sequence is that of ATP synthase epsilon chain from Geobacter sulfurreducens (strain ATCC 51573 / DSM 12127 / PCA).